The sequence spans 151 residues: Macrodomain Ter protein (151 aa).

The protein belongs to the MatP family. In terms of assembly, homodimer.

The protein resides in the cytoplasm. Its function is as follows. Required for spatial organization of the terminus region of the chromosome (Ter macrodomain) during the cell cycle. Prevents early segregation of duplicated Ter macrodomains during cell division. Binds specifically to matS, which is a 13 bp signature motif repeated within the Ter macrodomain. The polypeptide is Macrodomain Ter protein (Escherichia fergusonii (strain ATCC 35469 / DSM 13698 / CCUG 18766 / IAM 14443 / JCM 21226 / LMG 7866 / NBRC 102419 / NCTC 12128 / CDC 0568-73)).